The following is a 349-amino-acid chain: UDP-3-O-acylglucosamine N-acyltransferase (349 aa).

The Proton acceptor role is filled by His246.

This sequence belongs to the transferase hexapeptide repeat family. LpxD subfamily. In terms of assembly, homotrimer.

It carries out the reaction a UDP-3-O-[(3R)-3-hydroxyacyl]-alpha-D-glucosamine + a (3R)-hydroxyacyl-[ACP] = a UDP-2-N,3-O-bis[(3R)-3-hydroxyacyl]-alpha-D-glucosamine + holo-[ACP] + H(+). It functions in the pathway bacterial outer membrane biogenesis; LPS lipid A biosynthesis. Functionally, catalyzes the N-acylation of UDP-3-O-acylglucosamine using 3-hydroxyacyl-ACP as the acyl donor. Is involved in the biosynthesis of lipid A, a phosphorylated glycolipid that anchors the lipopolysaccharide to the outer membrane of the cell. This Trichormus variabilis (strain ATCC 29413 / PCC 7937) (Anabaena variabilis) protein is UDP-3-O-acylglucosamine N-acyltransferase.